Consider the following 518-residue polypeptide: MIEDISKKIAWLKKNPKMLKGIFRGIERETLRIQKNGHFSKTIHPYLIGSSLTHKWITTDFSENLLEFITPTSDNIDYLLSFLTDLHSFTASKIKNERMWPFSIPYCFNDQTNIQIAQYGKSNIGKMKTTYRIGLKNRYGDLINTISGIHYNFSLPLFFWTNWENNQNKKNNTDLISSGYLNLIRNYYRFGWIVPYLFGSSPAISSFFLKDTKKKYKFKKNKEDIFYLPWSTSLRLSDIGYSNTNILDLNIMFNDFNEYIESFQNALKTPSKKFINIGLKDEHGNFKQLNTNILQIENELYTQIRPKRKTKDGESLLEALKNRGIEYVEIRSLDVNPFSPIGINKNQILLLDLFLIWCALIDSPKIDKTDFLLTTKNWERIIYEGRKPNQKIYINNNNETKTLIEIGQIIFKDLNEIALILDSNSNNLLYQKACKETQLFLKNPELTYSAQCLNFLMTTGIKKTGLYLANKYHEKFINKNYFNLNQSVLEQEVIRSHQKKIEIEREDILSFEEYIRNK.

This sequence belongs to the glutamate--cysteine ligase type 1 family. Type 1 subfamily.

The catalysed reaction is L-cysteine + L-glutamate + ATP = gamma-L-glutamyl-L-cysteine + ADP + phosphate + H(+). It functions in the pathway sulfur metabolism; glutathione biosynthesis; glutathione from L-cysteine and L-glutamate: step 1/2. This Buchnera aphidicola subsp. Acyrthosiphon pisum (strain 5A) protein is Glutamate--cysteine ligase.